The sequence spans 312 residues: MVLPPPDKRHVCLTTIVIMTSMAFMDAYLVEQNQGPRKIGVCIIVLVGDICFLIVLRYVAVWVGAEVKTAKRGYAMILWFLYIFVLEIKLYFIFQNYKADKKNLETVARKALTLLLSICVPGLYLVLVALDSMEYIRTFRKKEDLRGRLFWVALDLLDILDIQANLWEPHRTGLPIWAEGLMFFYCYILLLILPCVSLSEISMQGEHIAPQKMMLYPVLSLVTINIVTIFIRAINMVLFQDSRVSTIFIGKNIIAIATKACTFLEYKRQVKEFPQNAIALELQQNSLSHNQTLHSTQGIPHEPSPTSEILDT.

A run of 6 helical transmembrane segments spans residues 10–30 (HVCL…AYLV), 43–63 (IIVL…AVWV), 74–94 (YAMI…YFIF), 111–131 (ALTL…VALD), 173–193 (GLPI…LLIL), and 219–239 (LSLV…MVLF). Positions 291–312 (QTLHSTQGIPHEPSPTSEILDT) are disordered.

Belongs to the TMEM121 family.

It is found in the membrane. Functionally, may play a role in MAPK signaling. The sequence is that of Transmembrane protein 121 (TMEM121) from Gallus gallus (Chicken).